A 241-amino-acid chain; its full sequence is Pyridoxine 5'-phosphate synthase (241 aa).

Asn-7 provides a ligand contact to 3-amino-2-oxopropyl phosphate. 9–10 (DH) contributes to the 1-deoxy-D-xylulose 5-phosphate binding site. Arg-18 provides a ligand contact to 3-amino-2-oxopropyl phosphate. His-43 functions as the Proton acceptor in the catalytic mechanism. The 1-deoxy-D-xylulose 5-phosphate site is built by Arg-45 and His-50. Catalysis depends on Glu-70, which acts as the Proton acceptor. Position 100 (Thr-100) interacts with 1-deoxy-D-xylulose 5-phosphate. The Proton donor role is filled by His-191. Residues Gly-192 and 213-214 (GH) each bind 3-amino-2-oxopropyl phosphate.

This sequence belongs to the PNP synthase family. In terms of assembly, homooctamer; tetramer of dimers.

The protein localises to the cytoplasm. It catalyses the reaction 3-amino-2-oxopropyl phosphate + 1-deoxy-D-xylulose 5-phosphate = pyridoxine 5'-phosphate + phosphate + 2 H2O + H(+). It participates in cofactor biosynthesis; pyridoxine 5'-phosphate biosynthesis; pyridoxine 5'-phosphate from D-erythrose 4-phosphate: step 5/5. In terms of biological role, catalyzes the complicated ring closure reaction between the two acyclic compounds 1-deoxy-D-xylulose-5-phosphate (DXP) and 3-amino-2-oxopropyl phosphate (1-amino-acetone-3-phosphate or AAP) to form pyridoxine 5'-phosphate (PNP) and inorganic phosphate. The sequence is that of Pyridoxine 5'-phosphate synthase from Acidithiobacillus ferrooxidans (strain ATCC 23270 / DSM 14882 / CIP 104768 / NCIMB 8455) (Ferrobacillus ferrooxidans (strain ATCC 23270)).